The following is a 198-amino-acid chain: Glycerol-3-phosphate acyltransferase (198 aa).

4 helical membrane passes run 3–23 (VEWLLIPFAYLLGSVSSAVIV), 81–101 (LFAAIGFAAFVGHLYPVFFQF), 113–133 (VLLGFAWPVGLMALLTWIGVA), and 153–175 (YVWLWLGSAELVVATLFMSMLLV).

The protein belongs to the PlsY family. Probably interacts with PlsX.

The protein resides in the cell inner membrane. The enzyme catalyses an acyl phosphate + sn-glycerol 3-phosphate = a 1-acyl-sn-glycero-3-phosphate + phosphate. It functions in the pathway lipid metabolism; phospholipid metabolism. Functionally, catalyzes the transfer of an acyl group from acyl-phosphate (acyl-PO(4)) to glycerol-3-phosphate (G3P) to form lysophosphatidic acid (LPA). This enzyme utilizes acyl-phosphate as fatty acyl donor, but not acyl-CoA or acyl-ACP. In Methylococcus capsulatus (strain ATCC 33009 / NCIMB 11132 / Bath), this protein is Glycerol-3-phosphate acyltransferase.